Reading from the N-terminus, the 221-residue chain is Cytidylate kinase 1 (221 aa).

Residue 7 to 15 (GPSASGKSS) coordinates ATP.

It belongs to the cytidylate kinase family. Type 1 subfamily.

It localises to the cytoplasm. The enzyme catalyses CMP + ATP = CDP + ADP. It catalyses the reaction dCMP + ATP = dCDP + ADP. In Borreliella burgdorferi (strain ATCC 35210 / DSM 4680 / CIP 102532 / B31) (Borrelia burgdorferi), this protein is Cytidylate kinase 1.